The primary structure comprises 996 residues: MGKKQGKQLSDLKKELELDQHKIPLEELCRRLGTNTETGLTSSQAKSHLEKYGPNALTPPRTTPEWIKFCKQLFGGFQMLLWIGSILCFIAYTMEKYKNPDVLGDNLYLGLALLFVVIMTGCFAYYQDHNASKIMDSFKNLMPQFAFVIRDGKKIQLKAEEVTVGDLVEVKFGDRIPADIRITSCQSMKVDNSSLTGESEPQSRSTECTNDNPLETKNLAFFFTNTLEGTGRGIVINVGDDSVMGRIACLASSLDSGKTPIAREIEHFIHIITAMAVSLAAVFAVISFLYGYTWLEAAIFMIGIIVAKVPEGLLATVTVCLTLTAKRMAKKNCLVRNLEAVETLGSTSTICSDKTGTLTQNRMTVAHMWFDQKIVTADTTENQSGNQLYRGSKGFPELIRVASLCSRAEFKTEHAHLPVLKRDVNGDASEAAILKFAEMSTGSVMNIRSKQKKVSEIPFNSANKYQVSVHEREDKSGYFLVMKGAPERILERCSTILIDGTEIPLDNHMKECFNNAYMELGGMGERVLGFCDFELPSDQYPRGYVFDADEPNFPISGLRFVGLMSMIDPPRAAVPDAVSKCRSAGIKVIMVTGDHPITAKAIARQVGIISEGHETVDDIAARLNIPVSEVNPRSAQAAVIHGNDLKDMNSDQLDDILRHYREIVFARTSPQQKLIIVEGVQRQGEFVAVTGDGVNDSPALKKADIGVAMGIAGSDVSKQAADMILLDDNFASIVTGVEEGRLIFDNIKKSIAYTLTSKIPELSPFLMYILFDLPLAIGTVTILCIDLGTDVVPAISMAYEGPEADPRKPRDPVKEKLVNERLISMAYGQIGVMQAFGGFFTYFVIMGECGFLPNRLFGLRKWWESKAYNDLTDSYGQEWTWDARKQLEYTCHTAFFISIVIVQWTDLIICKTRRLSLFQQGMKNGTLNFALVFETCVAAFLSYTPGMDKGLRMYPLKIWWWFPPMPFSLLILVYDECRKFLMRRNPGGFLERETYY.

Helical transmembrane passes span 73–93 and 107–123; these read LFGG…IAYT and LYLG…TGCF. The interval 191-211 is disordered; that stretch reads DNSSLTGESEPQSRSTECTND. 2 consecutive transmembrane segments (helical) span residues 268–290 and 297–325; these read FIHI…SFLY and AAIF…TLTA. Catalysis depends on D353, which acts as the 4-aspartylphosphate intermediate. K483 contacts ATP. Positions 692 and 696 each coordinate Mg(2+). 4 helical membrane-spanning segments follow: residues 762–785, 820–847, 889–909, and 926–951; these read LSPF…ILCI, ERLI…VIMG, YTCH…DLII, and TLNF…DKGL.

It belongs to the cation transport ATPase (P-type) (TC 3.A.3) family. Type IIC subfamily. As to quaternary structure, the sodium/potassium-transporting ATPase is composed of a catalytic alpha subunit, an auxiliary non-catalytic beta subunit and an additional regulatory subunit.

The protein localises to the cell membrane. It carries out the reaction K(+)(out) + Na(+)(in) + ATP + H2O = K(+)(in) + Na(+)(out) + ADP + phosphate + H(+). This is the catalytic component of the active enzyme, which catalyzes the hydrolysis of ATP coupled with the exchange of sodium and potassium ions across the plasma membrane. This action creates the electrochemical gradient of sodium and potassium ions, providing the energy for active transport of various nutrients. The sequence is that of Sodium/potassium-transporting ATPase subunit alpha-A from Artemia franciscana (Brine shrimp).